Reading from the N-terminus, the 509-residue chain is Erythropoietin receptor (509 aa).

The first 24 residues, 1–24, serve as a signal peptide directing secretion; that stretch reads MYHFGATLWPGVGSLCLLLAGATW. The Extracellular segment spans residues 25–251; the sequence is APSPNSPDAK…SLLTASDLDP (227 aa). 2 disulfides stabilise this stretch: Cys-52/Cys-62 and Cys-91/Cys-107. The region spanning 148–248 is the Fibronectin type-III domain; sequence PPAGLLARRA…EPASLLTASD (101 aa). Asn-184 is a glycosylation site (N-linked (GlcNAc...) asparagine). The WSXWS motif signature appears at 234-238; it reads WSAWS. The helical transmembrane segment at 252–274 threads the bilayer; it reads LILTLSLILVLILLLLAVLALLS. Over 275–509 the chain is Cytoplasmic; that stretch reads HRRTLKQKIW…PSPPNYVTCS (235 aa). A Glycyl lysine isopeptide (Lys-Gly) (interchain with G-Cter in ubiquitin) cross-link involves residue Lys-282. The Box 1 motif signature appears at 283–291; it reads IWPGIPSPE. A phosphotyrosine; by JAK2 mark is found at Tyr-369 and Tyr-427. The short motif at 453–458 is the ITIM motif element; sequence LKYLYL. Lys-454 is covalently cross-linked (Glycyl lysine isopeptide (Lys-Gly) (interchain with G-Cter in ubiquitin)). Tyr-455, Tyr-457, Tyr-469, Tyr-486, Tyr-490, and Tyr-505 each carry phosphotyrosine; by JAK2. A disordered region spans residues 467–509; it reads TDYSSGGSQETQGGSSSGPYSNPYENSLVPAPEPSPPNYVTCS. Positions 470–493 are enriched in low complexity; sequence SSGGSQETQGGSSSGPYSNPYENS.

Belongs to the type I cytokine receptor family. Type 1 subfamily. Forms homodimers on EPO stimulation. The tyrosine-phosphorylated form interacts with several SH2 domain-containing proteins including LYN, the adapter protein SH2B2, PTPN6, PTPN11, JAK2, PI3 kinases, STAT5A/B, SOCS3, CRKL. Interacts with INPP5D/SHIP1. SH2B2 binding inhibits the JAK-STAT signaling. Interacts with RHEX; this interaction occurs in a erythropoietin (EPO)-dependent manner. Interacts with ATXN2L. On EPO stimulation, phosphorylated on C-terminal tyrosine residues by JAK2. The phosphotyrosine motifs are also recruitment sites for several SH2-containing proteins and adapter proteins which mediate cell proliferation. Phosphorylation on Tyr-455 is required for PTPN6 interaction, Tyr-427 for PTPN11. Tyr-427 is also required for SOCS3 binding, but Tyr-455/Tyr-457 motif is the preferred binding site. Post-translationally, ubiquitinated by the ECS(SOCS2) complex following ligand-binding and phosphorylation by JAK2, leading to its degradation by the proteasome. Regulation by the ECS(SOCS2) complex acts as a negative feedback loop of erythropoietin-mediated signaling pathway. Ubiquitination at Lys-282 mediates receptor internalization, whereas ubiquitination at Lys-454 promotes trafficking of activated receptors to the lysosomes for degradation. Ubiquitinated by NOSIP; appears to be either multi-monoubiquitinated or polyubiquitinated. Ubiquitination mediates proliferation and survival of EPO-dependent cells.

The protein localises to the cell membrane. Its function is as follows. Receptor for erythropoietin, which mediates erythropoietin-induced erythroblast proliferation and differentiation. Upon EPO stimulation, EPOR dimerizes triggering the JAK2/STAT5 signaling cascade. In some cell types, can also activate STAT1 and STAT3. May also activate the LYN tyrosine kinase. In terms of biological role, isoform EPOR-T acts as a dominant-negative receptor of EPOR-mediated signaling. The polypeptide is Erythropoietin receptor (EPOR) (Sus scrofa (Pig)).